The chain runs to 4450 residues: Gramicidin S synthase 2 (4450 aa).

Residues 467–1044 form a domain 1 (proline-activating) region; it reads DKTIHQLFTE…IQEISNYING (578 aa). Carrier domains follow at residues 971–1046, 2006–2081, 3051–3126, and 4089–4164; these read VPTN…NGAK, APSS…ADGE, APRT…EETD, and APRN…THQE. 4 positions are modified to O-(pantetheine 4'-phosphoryl)serine: Ser-1006, Ser-2041, Ser-3086, and Ser-4124. The tract at residues 1521-2080 is domain 2 (valine-activating); that stretch reads DHVAVGWKDQ…SALAQYIADG (560 aa). The tract at residues 2538 to 3134 is domain 3 (ornithine-activating); the sequence is YATNKIFHEL…TDTEQYMAIQ (597 aa). Residues 3590 to 4172 form a domain 4 (leucine-activating) region; that stretch reads IQELFEEQVK…QESENNVHQP (583 aa).

This sequence belongs to the ATP-dependent AMP-binding enzyme family. Large multienzyme complex of GrsA and GrsB. It depends on pantetheine 4'-phosphate as a cofactor.

It participates in antibiotic biosynthesis; gramicidin S biosynthesis. Its function is as follows. This protein is a multifunctional enzyme, able to activate and polymerize the amino acids Pro, Val, Orn and Leu. Activation sites for these AA consist of individual domains. This is Gramicidin S synthase 2 (grsB) from Brevibacillus brevis (Bacillus brevis).